Reading from the N-terminus, the 108-residue chain is MYCEANPPKCTSSNTTLSGHAKPCNLMTAVKTARQATNSFSLRVTMVRNEANSALGSVTIKGLTGPCLISSSGTGSSCSTRLYVFSSDMTVLVAVSCFLIGSSDTTSL.

This is an uncharacterized protein from Saccharomyces cerevisiae (strain ATCC 204508 / S288c) (Baker's yeast).